The chain runs to 595 residues: Anthranilate synthase alpha subunit 1, chloroplastic (595 aa).

Residues 1–54 (MSSSMNVATMQALTFSRRLLPSVASRYLSSSSVTVTGYSGRSSAYAPSFRSIKC) constitute a chloroplast transit peptide. Position 55 is an N-acetylvaline (Val-55). L-tryptophan is bound by residues Ser-115 and 356–358 (PYM). 391–392 (GT) serves as a coordination point for chorismate. Glu-418 is a Mg(2+) binding site. Chorismate contacts are provided by residues Tyr-506, Arg-526, 558-560 (GAG), and Gly-560. Mg(2+) is bound at residue Glu-573.

This sequence belongs to the anthranilate synthase component I family. Heterotetramer consisting of two non-identical subunits: a beta subunit and a large alpha subunit. It depends on Mg(2+) as a cofactor. In terms of tissue distribution, expressed in the central cylinder of mature primary root zones, including pericycle and early lateral root primordia, and vasculature of cotyledons.

The protein resides in the plastid. The protein localises to the chloroplast. The catalysed reaction is chorismate + L-glutamine = anthranilate + pyruvate + L-glutamate + H(+). Its pathway is amino-acid biosynthesis; L-tryptophan biosynthesis; L-tryptophan from chorismate: step 1/5. With respect to regulation, feedback inhibition by tryptophan. Functionally, part of a heterotetrameric complex that catalyzes the two-step biosynthesis of anthranilate, an intermediate in the biosynthesis of L-tryptophan. In the first step, the glutamine-binding beta subunit of anthranilate synthase (AS) provides the glutamine amidotransferase activity which generates ammonia as a substrate that, along with chorismate, is used in the second step, catalyzed by the large alpha subunit of AS to produce anthranilate. Plays an important regulatory role in auxin production via the tryptophan-dependent biosynthetic pathway. The chain is Anthranilate synthase alpha subunit 1, chloroplastic (ASA1) from Arabidopsis thaliana (Mouse-ear cress).